Consider the following 511-residue polypeptide: 2,3-bisphosphoglycerate-independent phosphoglycerate mutase (511 aa).

Asp12 is a binding site for Mn(2+). Residue Tyr36 is modified to Phosphotyrosine. Ser62 contacts Mn(2+). Ser62 serves as the catalytic Phosphoserine intermediate. Residues His123, 153 to 154 (RD), Arg185, Arg191, 261 to 264 (RPDR), and Lys336 contribute to the substrate site. Positions 403, 407, 444, 445, and 462 each coordinate Mn(2+).

The protein belongs to the BPG-independent phosphoglycerate mutase family. As to quaternary structure, monomer. Requires Mn(2+) as cofactor.

It catalyses the reaction (2R)-2-phosphoglycerate = (2R)-3-phosphoglycerate. Its pathway is carbohydrate degradation; glycolysis; pyruvate from D-glyceraldehyde 3-phosphate: step 3/5. In terms of biological role, catalyzes the interconversion of 2-phosphoglycerate and 3-phosphoglycerate. The chain is 2,3-bisphosphoglycerate-independent phosphoglycerate mutase from Geobacillus kaustophilus (strain HTA426).